The primary structure comprises 230 residues: Porin OmpL (230 aa).

An N-terminal signal peptide occupies residues 1-20; it reads MKSLNTLVILTSVISTSVFA.

It belongs to the oligogalacturonate-specific porin KdgM (TC 1.B.35) family. OmpL subfamily.

The protein resides in the cell outer membrane. Outer membrane channel protein that allows an efficient diffusion of low-molecular-weight solutes such as small sugars and tetraglycine. However, the specific substrate recognized by the OmpL channel is unknown. This is Porin OmpL (ompL) from Salmonella typhi.